Here is a 299-residue protein sequence, read N- to C-terminus: Probable lipid kinase YegS (299 aa).

The DAGKc domain maps to 2-133; it reads AEFPASLLIL…IDMAQVNKQT (132 aa). Residues Thr40, 66 to 72, and Thr95 contribute to the ATP site; that span reads GDGTINE. Leu215, Asp218, and Leu220 together coordinate Mg(2+). Residue Glu271 is the Proton acceptor of the active site.

Belongs to the diacylglycerol/lipid kinase family. YegS lipid kinase subfamily. The cofactor is Mg(2+). Requires Ca(2+) as cofactor.

It localises to the cytoplasm. Its function is as follows. Probably phosphorylates lipids; the in vivo substrate is unknown. This chain is Probable lipid kinase YegS, found in Escherichia coli O127:H6 (strain E2348/69 / EPEC).